We begin with the raw amino-acid sequence, 568 residues long: 2-succinyl-5-enolpyruvyl-6-hydroxy-3-cyclohexene-1-carboxylate synthase (568 aa).

The protein belongs to the TPP enzyme family. MenD subfamily. In terms of assembly, homodimer. Mg(2+) is required as a cofactor. Mn(2+) serves as cofactor. Requires thiamine diphosphate as cofactor.

It carries out the reaction isochorismate + 2-oxoglutarate + H(+) = 5-enolpyruvoyl-6-hydroxy-2-succinyl-cyclohex-3-ene-1-carboxylate + CO2. The protein operates within quinol/quinone metabolism; 1,4-dihydroxy-2-naphthoate biosynthesis; 1,4-dihydroxy-2-naphthoate from chorismate: step 2/7. It participates in quinol/quinone metabolism; menaquinone biosynthesis. In terms of biological role, catalyzes the thiamine diphosphate-dependent decarboxylation of 2-oxoglutarate and the subsequent addition of the resulting succinic semialdehyde-thiamine pyrophosphate anion to isochorismate to yield 2-succinyl-5-enolpyruvyl-6-hydroxy-3-cyclohexene-1-carboxylate (SEPHCHC). This Haemophilus influenzae (strain ATCC 51907 / DSM 11121 / KW20 / Rd) protein is 2-succinyl-5-enolpyruvyl-6-hydroxy-3-cyclohexene-1-carboxylate synthase.